We begin with the raw amino-acid sequence, 175 residues long: Glutamyl-tRNA(Gln) amidotransferase subunit C, mitochondrial (175 aa).

This sequence belongs to the GatC family. In terms of assembly, subunit of the heterotrimeric GatCAB amidotransferase (AdT) complex, composed of A, B and C subunits.

Its subcellular location is the mitochondrion. It carries out the reaction L-glutamyl-tRNA(Gln) + L-glutamine + ATP + H2O = L-glutaminyl-tRNA(Gln) + L-glutamate + ADP + phosphate + H(+). Its function is as follows. Allows the formation of correctly charged Gln-tRNA(Gln) through the transamidation of misacylated Glu-tRNA(Gln) in the mitochondria. The reaction takes place in the presence of glutamine and ATP through an activated gamma-phospho-Glu-tRNA(Gln). This Caenorhabditis elegans protein is Glutamyl-tRNA(Gln) amidotransferase subunit C, mitochondrial.